The sequence spans 200 residues: Large ribosomal subunit protein uL4 (200 aa).

The disordered stretch occupies residues 38 to 68 (GRQGSKQQKTRSDVRGGGKRPWRQKGTGRAR). Residues 54 to 65 (GGKRPWRQKGTG) show a composition bias toward basic residues.

Belongs to the universal ribosomal protein uL4 family. As to quaternary structure, part of the 50S ribosomal subunit.

In terms of biological role, one of the primary rRNA binding proteins, this protein initially binds near the 5'-end of the 23S rRNA. It is important during the early stages of 50S assembly. It makes multiple contacts with different domains of the 23S rRNA in the assembled 50S subunit and ribosome. Functionally, forms part of the polypeptide exit tunnel. The polypeptide is Large ribosomal subunit protein uL4 (Pseudomonas fluorescens (strain Pf0-1)).